A 154-amino-acid chain; its full sequence is RING finger protein 11 (154 aa).

The segment covering 1–12 has biased composition (polar residues); that stretch reads MGNCLKSPTSDD. Positions 1–53 are disordered; it reads MGNCLKSPTSDDISLLHESQSDRASFGEGTEPDQEPPPPYQEQVPVPVYHPTP. Glycine 2 carries N-myristoyl glycine lipidation. Cysteine 4 is lipidated: S-palmitoyl cysteine. 2 positions are modified to phosphoserine: serine 14 and serine 25. The short motif at 37–40 is the PPxY motif element; the sequence is PPPY. Residues 41-51 are compositionally biased toward low complexity; it reads QEQVPVPVYHP. An RING-type zinc finger spans residues 99 to 140; sequence CVICMMDFVYGDPIRFLPCMHIYHLDCIDDWLMRSFTCPSCM. Threonine 135 bears the Phosphothreonine; by PKB/AKT1 mark.

As to quaternary structure, interacts (when phosphorylated) with 14-3-3. Interacts with the E3 ubiquitin-ligases NEDD4, ITCH, SMURF2 and WWP1. Also interacts with the E2 ubiquitin-conjugating enzymes UBE2D1 and UBE2N, but neither with CDC34, nor with UBE2L3. Interacts with ZNF350, EPS15 and STAMBP. After TNF stimulation, interacts with TAX1BP1, TNFAIP3 and RIPK1; these interactions are transient and they are lost after 1 hour of stimulation with TNF. Interacts with GGA1. Ubiquitinated in the presence of ITCH, SMURF2 and UBE2D1, as well as WWP1. Post-translationally, phosphorylation by PKB/AKT1 may accelerate degradation by the proteasome. In terms of processing, acylation at both Gly-2 and Cys-4 is required for proper localization to the endosomes.

Its subcellular location is the early endosome. The protein resides in the recycling endosome. It is found in the cytoplasm. The protein localises to the nucleus. Essential component of a ubiquitin-editing protein complex, comprising also TNFAIP3, ITCH and TAX1BP1, that ensures the transient nature of inflammatory signaling pathways. Promotes the association of TNFAIP3 to RIPK1 after TNF stimulation. TNFAIP3 deubiquitinates 'Lys-63' polyubiquitin chains on RIPK1 and catalyzes the formation of 'Lys-48'-polyubiquitin chains. This leads to RIPK1 proteasomal degradation and consequently termination of the TNF- or LPS-mediated activation of NF-kappa-B. Recruits STAMBP to the E3 ubiquitin-ligase SMURF2 for ubiquitination, leading to its degradation by the 26S proteasome. This is RING finger protein 11 (RNF11) from Bos taurus (Bovine).